The sequence spans 359 residues: Fructose-1,6-bisphosphatase class 1 (359 aa).

Mg(2+) is bound by residues Glu95, Asp117, Leu119, and Asp120. Residues Asp120–Ser123 and Asn212 each bind substrate. Residue Glu284 coordinates Mg(2+).

The protein belongs to the FBPase class 1 family. As to quaternary structure, homotetramer. Mg(2+) serves as cofactor.

Its subcellular location is the cytoplasm. It catalyses the reaction beta-D-fructose 1,6-bisphosphate + H2O = beta-D-fructose 6-phosphate + phosphate. Its pathway is carbohydrate biosynthesis; gluconeogenesis. The protein is Fructose-1,6-bisphosphatase class 1 of Hydrogenophilus thermoluteolus (Pseudomonas hydrogenothermophila).